A 217-amino-acid chain; its full sequence is Large ribosomal subunit protein uL3 (217 aa).

The protein belongs to the universal ribosomal protein uL3 family. Part of the 50S ribosomal subunit. Forms a cluster with proteins L14 and L19.

Functionally, one of the primary rRNA binding proteins, it binds directly near the 3'-end of the 23S rRNA, where it nucleates assembly of the 50S subunit. This is Large ribosomal subunit protein uL3 from Brachyspira hyodysenteriae (strain ATCC 49526 / WA1).